Consider the following 308-residue polypeptide: Taste receptor type 2 member 10 (308 aa).

Over 1–6 (MLSVVE) the chain is Extracellular. Residues 7–27 (GIFIFVVISESVFGVLGNGFI) traverse the membrane as a helical segment. The Cytoplasmic portion of the chain corresponds to 28 to 42 (GLVNCIDCAKNKLST). Residues 43–63 (IGFILTGLAISRIFLIWVIIT) traverse the membrane as a helical segment. Residues 64–100 (DGFIQIFSPDIYASGNLIEYISYIWVIGNQSSMWFAT) lie on the Extracellular side of the membrane. N92 carries N-linked (GlcNAc...) asparagine glycosylation. Residues 101–121 (SLSIFYFLKIANFSNYIFLWL) traverse the membrane as a helical segment. Residues 122–126 (KSRTN) are Cytoplasmic-facing. Residues 127–147 (MVLPFMMAFLLISSLLNFAHI) traverse the membrane as a helical segment. At 148 to 179 (VKILNDHKMKNDTVWHLNMYKSEYFIKQILLN) the chain is on the extracellular side. N158 carries N-linked (GlcNAc...) asparagine glycosylation. A helical membrane pass occupies residues 180-200 (LGVIFFFTLSLITCVLLIISL). Topologically, residues 201 to 227 (WRHNRQMQSNVTGLRDSNTEAHVKAMK) are cytoplasmic. Residues 228–248 (VLISFIILFILYFIGMALEIS) traverse the membrane as a helical segment. Over 249–257 (RFTVPENKL) the chain is Extracellular. A helical membrane pass occupies residues 258–278 (LLMFGMTTTAIYPWGHSFILI). Topologically, residues 279–308 (LGNSKLKQASLRVLQQLKCCEKRKKSQSHI) are cytoplasmic.

This sequence belongs to the G-protein coupled receptor T2R family.

It is found in the membrane. Functionally, receptor that may play a role in the perception of bitterness and is gustducin-linked. May play a role in sensing the chemical composition of the gastrointestinal content. The activity of this receptor may stimulate alpha gustducin, mediate PLC-beta-2 activation and lead to the gating of TRPM5. The polypeptide is Taste receptor type 2 member 10 (TAS2R10) (Pongo pygmaeus (Bornean orangutan)).